The primary structure comprises 90 residues: Small ribosomal subunit protein bS20 (90 aa).

Basic residues predominate over residues 1 to 11 (MAHHKSAKKRI). Residues 1 to 22 (MAHHKSAKKRIRQTERRTEVNR) form a disordered region. Residues 12-22 (RQTERRTEVNR) are compositionally biased toward basic and acidic residues.

The protein belongs to the bacterial ribosomal protein bS20 family.

Its function is as follows. Binds directly to 16S ribosomal RNA. The polypeptide is Small ribosomal subunit protein bS20 (Paramagnetospirillum magneticum (strain ATCC 700264 / AMB-1) (Magnetospirillum magneticum)).